The primary structure comprises 213 residues: uncharacterized protein (213 aa).

The next 3 membrane-spanning stretches (helical) occupy residues 26 to 46 (FINFIRIAIFIVMAWIGGLKV), 112 to 132 (ASYIIGAIIVTVGILTLAGIW), and 136 to 156 (AGLAGGLLTFGMSIVTLSFLI).

The protein resides in the cell membrane. This is an uncharacterized protein from Haemophilus influenzae (strain ATCC 51907 / DSM 11121 / KW20 / Rd).